We begin with the raw amino-acid sequence, 71 residues long: Prokaryotic ubiquitin-like protein Pup (71 aa).

The segment covering 1-18 (MATRDSGGQSQTGRSQQG) has biased composition (low complexity). The interval 1 to 42 (MATRDSGGQSQTGRSQQGEEIEDVTTEASAEAAERHAEITED) is disordered. An ARC ATPase binding region spans residues 27–65 (EASAEAAERHAEITEDVDDLLDEIDSVLEENAEEFVRGY). Positions 29 to 60 (SAEAAERHAEITEDVDDLLDEIDSVLEENAEE) form a coiled coil. Glu-71 participates in a covalent cross-link: Isoglutamyl lysine isopeptide (Glu-Lys) (interchain with K-? in acceptor proteins).

Belongs to the prokaryotic ubiquitin-like protein family. In terms of assembly, strongly interacts with the proteasome-associated ATPase ARC through a hydrophobic interface; the interacting region of Pup lies in its C-terminal half. There is one Pup binding site per ARC hexamer ring.

It functions in the pathway protein degradation; proteasomal Pup-dependent pathway. In terms of biological role, protein modifier that is covalently attached to lysine residues of substrate proteins, thereby targeting them for proteasomal degradation. The tagging system is termed pupylation. The chain is Prokaryotic ubiquitin-like protein Pup from Salinispora tropica (strain ATCC BAA-916 / DSM 44818 / JCM 13857 / NBRC 105044 / CNB-440).